The primary structure comprises 352 residues: MIEPDRLISAVSGRERDEQLDRAIRPLKLADYIGQPSVREQMELFIHAARGRQEALDHTLIFGPPGLGKTTLANIIAQEMGVSIKSTSGPVLERPGDLAALLTNLEAGDVLFVDEIHRLSPIVEEVLYPAMEDFQLDIMIGEGPAARSIKLDLPPFTLVGATTRAGMLTNPLRDRFGIVQRLEFYNVEDLATIVSRSAGILGLEIEPQGAAEIAKRARGTPRIANRLLRRVRDFAEVRGQGDITRVIADKALNLLDVDERGFDHLDRRLLLTMIDKFDGGPVGIDNLAAALSEERHTIEDVLEPYLIQQGYIMRTPRGRVVTRHAYLHFGLNIPKRLGPGVTTDLFTSEDGN.

Residues 4–185 (PDRLISAVSG…FGIVQRLEFY (182 aa)) are large ATPase domain (RuvB-L). ATP is bound by residues Ile-24, Arg-25, Gly-66, Lys-69, Thr-70, Thr-71, 132 to 134 (EDF), Arg-175, Tyr-185, and Arg-222. Mg(2+) is bound at residue Thr-70. The tract at residues 186 to 256 (NVEDLATIVS…IADKALNLLD (71 aa)) is small ATPAse domain (RuvB-S). The interval 259-352 (ERGFDHLDRR…TDLFTSEDGN (94 aa)) is head domain (RuvB-H). 3 residues coordinate DNA: Arg-295, Arg-314, and Arg-319.

This sequence belongs to the RuvB family. As to quaternary structure, homohexamer. Forms an RuvA(8)-RuvB(12)-Holliday junction (HJ) complex. HJ DNA is sandwiched between 2 RuvA tetramers; dsDNA enters through RuvA and exits via RuvB. An RuvB hexamer assembles on each DNA strand where it exits the tetramer. Each RuvB hexamer is contacted by two RuvA subunits (via domain III) on 2 adjacent RuvB subunits; this complex drives branch migration. In the full resolvosome a probable DNA-RuvA(4)-RuvB(12)-RuvC(2) complex forms which resolves the HJ.

Its subcellular location is the cytoplasm. The enzyme catalyses ATP + H2O = ADP + phosphate + H(+). In terms of biological role, the RuvA-RuvB-RuvC complex processes Holliday junction (HJ) DNA during genetic recombination and DNA repair, while the RuvA-RuvB complex plays an important role in the rescue of blocked DNA replication forks via replication fork reversal (RFR). RuvA specifically binds to HJ cruciform DNA, conferring on it an open structure. The RuvB hexamer acts as an ATP-dependent pump, pulling dsDNA into and through the RuvAB complex. RuvB forms 2 homohexamers on either side of HJ DNA bound by 1 or 2 RuvA tetramers; 4 subunits per hexamer contact DNA at a time. Coordinated motions by a converter formed by DNA-disengaged RuvB subunits stimulates ATP hydrolysis and nucleotide exchange. Immobilization of the converter enables RuvB to convert the ATP-contained energy into a lever motion, pulling 2 nucleotides of DNA out of the RuvA tetramer per ATP hydrolyzed, thus driving DNA branch migration. The RuvB motors rotate together with the DNA substrate, which together with the progressing nucleotide cycle form the mechanistic basis for DNA recombination by continuous HJ branch migration. Branch migration allows RuvC to scan DNA until it finds its consensus sequence, where it cleaves and resolves cruciform DNA. This is Holliday junction branch migration complex subunit RuvB from Pseudomonas aeruginosa (strain LESB58).